Consider the following 197-residue polypeptide: FMN-dependent NADH:quinone oxidoreductase (197 aa).

FMN contacts are provided by residues serine 10 and 17–19; that span reads SFS.

This sequence belongs to the azoreductase type 1 family. In terms of assembly, homodimer. The cofactor is FMN.

It carries out the reaction 2 a quinone + NADH + H(+) = 2 a 1,4-benzosemiquinone + NAD(+). The catalysed reaction is N,N-dimethyl-1,4-phenylenediamine + anthranilate + 2 NAD(+) = 2-(4-dimethylaminophenyl)diazenylbenzoate + 2 NADH + 2 H(+). In terms of biological role, quinone reductase that provides resistance to thiol-specific stress caused by electrophilic quinones. Its function is as follows. Also exhibits azoreductase activity. Catalyzes the reductive cleavage of the azo bond in aromatic azo compounds to the corresponding amines. The protein is FMN-dependent NADH:quinone oxidoreductase of Mycoplasmoides gallisepticum (strain R(low / passage 15 / clone 2)) (Mycoplasma gallisepticum).